Here is a 318-residue protein sequence, read N- to C-terminus: MRKSGCTVCSRSIGWVGLAVNTVLMVMKAFVGLIGGSQAMLADAMYSLKDMLNALMVVIGTTISSKPLDAEHPYGHGKVEFILSMVVSVVFIGLTGYLLVHAVQILLDESMHRTPHLIVLWAALVSVGVNVAMYFYSRCVAIETNSPIIKTMAKHHHGDATASGAVALGIIGAHYLNMPWIDPAVALWETIDLLLLGKVVFMDAYRGLMDHTAGEAVQNRIVDTAERVPGVRGVIHLRARYVGQDIWADMIIGVDPEHTVEQAHDICEAVQAAVCGKMRRIESLHVSAEAREAGDTSKPTFSEEPLTYDEVMLSKVDN.

Positions 1–210 are transmembrane domain (TMD); it reads MRKSGCTVCS…FMDAYRGLMD (210 aa). A run of 4 helical transmembrane segments spans residues 13–33, 39–59, 81–101, and 117–137; these read IGWVGLAVNTVLMVMKAFVGL, AMLADAMYSLKDMLNALMVVI, FILSMVVSVVFIGLTGYLLVH, and LIVLWAALVSVGVNVAMYFYS. Positions 211–318 are C-terminal domain (CTD); sequence HTAGEAVQNR…DEVMLSKVDN (108 aa). Fe cation-binding residues include D249, H264, H285, and E289.

It belongs to the cation diffusion facilitator (CDF) transporter (TC 2.A.4) family. As to quaternary structure, forms homodimers via its C-terminal domain (CTD) in the presence of metal cations. Interacts with MamB via their CTD.

It localises to the magnetosome membrane. The protein resides in the cell inner membrane. Probably plays a role in biomineralization. Required for stable accumulation of MamB. Probably binds and transports iron. May nucleate iron crystal formation. This is Magnetosome protein MamM (mamM) from Paramagnetospirillum magneticum (strain ATCC 700264 / AMB-1) (Magnetospirillum magneticum).